Reading from the N-terminus, the 333-residue chain is MYHSAKRRSSSRLMMFIIALIIFIFGLGLNLSVGASDISIIDSLKYLFVWDGSKEQLIISTLRLPRTLIGVFVGASLAVAGALMQAMTRNPLASPQIFGVNAGASLFVVASLVILPASPYSSVIFAFAGAAAGGAIVYMIASSGGMTPVKLALSGMAVHLFLSSMTQAIIILNESGEDVLYWMTGAIDGSNWQDVITIAPFSVIGIGLALVFSGSVSVLGLGDETAKGLGQNMNGIRILISLIILILSGASVAVAGPIGFVGLLVPHIVRKLIGEHYQYVLPFSALFGAILLVYADVLARWIAFPYESPVGIVTAIIGTPFFLYLARKGRNLK.

The next 9 membrane-spanning stretches (helical) occupy residues 13–33, 67–87, 97–117, 121–141, 151–171, 201–221, 238–258, 279–299, and 302–322; these read LMMFIIALIIFIFGLGLNLSV, TLIGVFVGASLAVAGALMQAM, IFGVNAGASLFVVASLVILPA, SSVIFAFAGAAAGGAIVYMIA, LALSGMAVHLFLSSMTQAIII, FSVIGIGLALVFSGSVSVLGL, ILISLIILILSGASVAVAGPI, YVLPFSALFGAILLVYADVLA, and IAFPYESPVGIVTAIIGTPFF.

The protein belongs to the binding-protein-dependent transport system permease family. FecCD subfamily. As to quaternary structure, the complex is composed of one ATP-binding protein (YfmF), two transmembrane proteins (YfmD and YfmE) and a solute-binding protein (YfmC).

Its subcellular location is the cell membrane. In terms of biological role, part of the ABC transporter complex YfmCDEF involved in citrate-dependent Fe(3+) import. Involved in the translocation of the substrate across the membrane. The sequence is that of Fe(3+)-citrate import system permease protein YfmD (yfmD) from Bacillus subtilis (strain 168).